A 493-amino-acid chain; its full sequence is Anthranilate synthase component 1 (493 aa).

L-tryptophan is bound by residues Ser-48 and Pro-273–Met-275. Residue Gly-308 to Thr-309 coordinates chorismate. Mg(2+) is bound at residue Glu-335. Chorismate is bound by residues Tyr-423, Arg-443, Gly-457–Gly-459, and Gly-459. Mg(2+) is bound at residue Glu-472.

Belongs to the anthranilate synthase component I family. Heterotetramer consisting of two non-identical subunits: a beta subunit (TrpG) and a large alpha subunit (TrpE). Requires Mg(2+) as cofactor.

It carries out the reaction chorismate + L-glutamine = anthranilate + pyruvate + L-glutamate + H(+). It functions in the pathway amino-acid biosynthesis; L-tryptophan biosynthesis; L-tryptophan from chorismate: step 1/5. With respect to regulation, feedback inhibited by tryptophan. Functionally, part of a heterotetrameric complex that catalyzes the two-step biosynthesis of anthranilate, an intermediate in the biosynthesis of L-tryptophan. In the first step, the glutamine-binding beta subunit (TrpG) of anthranilate synthase (AS) provides the glutamine amidotransferase activity which generates ammonia as a substrate that, along with chorismate, is used in the second step, catalyzed by the large alpha subunit of AS (TrpE) to produce anthranilate. In the absence of TrpG, TrpE can synthesize anthranilate directly from chorismate and high concentrations of ammonia. The polypeptide is Anthranilate synthase component 1 (trpE) (Pseudomonas putida (Arthrobacter siderocapsulatus)).